Here is a 207-residue protein sequence, read N- to C-terminus: Guanylate kinase (207 aa).

One can recognise a Guanylate kinase-like domain in the interval 6–185; that stretch reads GLLIVLSGPS…AKERIQSIVE (180 aa). Residue 13-20 coordinates ATP; that stretch reads GPSGVGKG.

This sequence belongs to the guanylate kinase family.

It is found in the cytoplasm. It carries out the reaction GMP + ATP = GDP + ADP. In terms of biological role, essential for recycling GMP and indirectly, cGMP. The polypeptide is Guanylate kinase (Staphylococcus haemolyticus (strain JCSC1435)).